The sequence spans 283 residues: Energy-coupling factor transporter ATP-binding protein EcfA1 (283 aa).

Residues 7 to 244 (VEFRHVSFTY…PELLQEIGLD (238 aa)) form the ABC transporter domain. Residue 41 to 48 (GHNGSGKS) coordinates ATP.

Belongs to the ABC transporter superfamily. Energy-coupling factor EcfA family. In terms of assembly, forms a stable energy-coupling factor (ECF) transporter complex composed of 2 membrane-embedded substrate-binding proteins (S component), 2 ATP-binding proteins (A component) and 2 transmembrane proteins (T component).

The protein resides in the cell membrane. Its function is as follows. ATP-binding (A) component of a common energy-coupling factor (ECF) ABC-transporter complex. Unlike classic ABC transporters this ECF transporter provides the energy necessary to transport a number of different substrates. In Lactobacillus acidophilus (strain ATCC 700396 / NCK56 / N2 / NCFM), this protein is Energy-coupling factor transporter ATP-binding protein EcfA1.